The chain runs to 515 residues: Pisatin demethylase (515 aa).

Cys453 contacts heme.

This sequence belongs to the cytochrome P450 family. Requires heme as cofactor.

In terms of biological role, can detoxify the phytoalexin pisatin from garden pea. Pisatin is an antimicrobial compound produced by pea in response to infection by plant pathogens. This Fusarium vanettenii (Neocosmospora pisi) protein is Pisatin demethylase (PDAT9).